Consider the following 84-residue polypeptide: Exodeoxyribonuclease 7 small subunit (84 aa).

Belongs to the XseB family. Heterooligomer composed of large and small subunits.

The protein resides in the cytoplasm. It catalyses the reaction Exonucleolytic cleavage in either 5'- to 3'- or 3'- to 5'-direction to yield nucleoside 5'-phosphates.. Functionally, bidirectionally degrades single-stranded DNA into large acid-insoluble oligonucleotides, which are then degraded further into small acid-soluble oligonucleotides. In Haemophilus influenzae (strain ATCC 51907 / DSM 11121 / KW20 / Rd), this protein is Exodeoxyribonuclease 7 small subunit.